The chain runs to 77 residues: MNLRRCVQALLLLWLCLSAVCGGPLLQTSDGKEMEEGTIRYLVQPRGPRSGPGPWQGGRRKFRRQRPRLSHKGPMPF.

An N-terminal signal peptide occupies residues 1–22 (MNLRRCVQALLLLWLCLSAVCG). The propeptide occupies 23 to 41 (GPLLQTSDGKEMEEGTIRY). Positions 43 to 77 (VQPRGPRSGPGPWQGGRRKFRRQRPRLSHKGPMPF) are disordered. A compositionally biased stretch (basic residues) spans 58–71 (GRRKFRRQRPRLSH). Gln-65 carries the post-translational modification Pyrrolidone carboxylic acid.

It belongs to the apelin family. Post-translationally, at least 5 active peptides may be produced by proteolytic processing of the peptide precursor.

It is found in the secreted. It localises to the extracellular space. Peptide hormone that functions as endogenous ligand for the G-protein-coupled apelin receptor (APLNR/APJ), that plays a role in cadiovascular homeostasis. Functions as a balanced agonist activating both G(i) protein pathway and beta-arrestin pathway of APLNR. Downstream G proteins activation, apelin can inhibit cAMP production and activate key intracellular effectors such as ERKs. On the other hand, APLNR activation induces beta-arrestin recruitment to the membrane leading to desensitization and internalization of the receptor. Apelin blunts cardiac hypertrophic induction from APLNR on response to pathological stimuli, but also induces myocardial hypertrophy under normal conditions. Apelin-36 dissociates more hardly than (pyroglu)apelin-13 from APLNR. Involved in the regulation of cardiac precursor cell movements during gastrulation and heart morphogenesis. Has an inhibitory effect on cytokine production in response to T-cell receptor/CD3 cross-linking; the oral intake of apelin in the colostrum and the milk might therefore modulate immune responses in neonates. Plays a role in early coronary blood vessels formation. Mediates myocardial contractility in an ERK1/2-dependent manner. May also have a role in the central control of body fluid homeostasis by influencing vasopressin release and drinking behavior. The chain is Apelin (APLN) from Bos taurus (Bovine).